Reading from the N-terminus, the 516-residue chain is Polyprenol-phosphate-mannose--protein mannosyltransferase (516 aa).

9 consecutive transmembrane segments (helical) span residues 113–133 (YNGL…VMLV), 143–163 (STLV…SFVS), 166–186 (TALL…CLMV), 234–254 (WSGL…DAIA), 275–295 (AAYV…APWF), 384–404 (VMLV…GWAL), 413–433 (WRYG…FADI), 437–457 (MYFF…ALIL), and 473–493 (LGLL…AWMY).

Belongs to the glycosyltransferase 39 family.

It is found in the cell membrane. It functions in the pathway protein modification; protein glycosylation. In terms of biological role, protein O-mannosyltransferase that catalyzes the transfer of a single mannose residue from a polyprenol phospho-mannosyl lipidic donor to the hydroxyl group of selected serine and threonine residues in acceptor proteins. This is Polyprenol-phosphate-mannose--protein mannosyltransferase from Mycolicibacterium smegmatis (strain ATCC 700084 / mc(2)155) (Mycobacterium smegmatis).